The sequence spans 152 residues: Ribosome maturation factor RimP (152 aa).

It belongs to the RimP family.

Its subcellular location is the cytoplasm. In terms of biological role, required for maturation of 30S ribosomal subunits. This Elusimicrobium minutum (strain Pei191) protein is Ribosome maturation factor RimP.